The chain runs to 1550 residues: Cellulose synthase 1 (1550 aa).

Residues 1-741 (MPEVRSSTQS…KERVLKGTVK (741 aa)) form a catalytic region. 3 helical membrane-spanning segments follow: residues 26–46 (GAGL…TSVT), 47–67 (LPPE…FIVG), and 106–126 (GLLG…LFLS). The segment at 147-240 (EWPTVDIFVP…YILIFDCDHV (94 aa)) is catalytic subdomain A. The active site involves Asp189. Substrate is bound by residues Asp236 and Asp238. A catalytic subdomain B region spans residues 317–377 (TAIEQIGGFA…GQRVRWARGM (61 aa)). Asp333 is an active-site residue. The next 5 helical transmembrane spans lie at 398–418 (LCYL…IFLS), 423–443 (FLFF…AYAI), 468–488 (VYET…LLSP), 507–527 (FDLG…GGLA), and 547–567 (LLNS…IAVG). The PilZ domain occupies 572-647 (QKRNSHRIPA…PARIIRAGNG (76 aa)). Disordered stretches follow at residues 708-731 (VHRS…NPSR) and 768-813 (APAH…QPLA). Residues 742–1550 (MVSLLALLTF…KQLEDERRKS (809 aa)) are cyclic di-GMP binding domain. Positions 768–796 (APAHQPEASDLPPLPALLPATSGAAQAGS) are enriched in low complexity. The helical transmembrane segment at 1513–1533 (VLLVGLLGCILIVSVLARALA) threads the bilayer.

In the N-terminal section; belongs to the glycosyltransferase 2 family. This sequence in the C-terminal section; belongs to the AcsB/BcsB family. The cofactor is Mg(2+).

Its subcellular location is the cell inner membrane. It carries out the reaction [(1-&gt;4)-beta-D-glucosyl](n) + UDP-alpha-D-glucose = [(1-&gt;4)-beta-D-glucosyl](n+1) + UDP + H(+). It functions in the pathway glycan metabolism; bacterial cellulose biosynthesis. In terms of biological role, bifunctional protein comprised of a catalytic subunit and a regulatory subunit. The catalytic subunit of cellulose synthase polymerizes uridine 5'-diphosphate glucose to cellulose in a processive way. The thick cellulosic mats generated by this enzyme probably provide a specialized protective environment to the bacterium. The regulatory subunit binds bis-(3'-5') cyclic diguanylic acid (c-di-GMP). The chain is Cellulose synthase 1 (acsAB) from Novacetimonas hansenii (Komagataeibacter hansenii).